Here is a 468-residue protein sequence, read N- to C-terminus: Neurexin-1-beta (468 aa).

Positions 1 to 46 (MYQRMLRCGAELGSPGGGSSGGAGGRLALLWIVPLTLSGLLGVAWG) are cleaved as a signal peptide. Residues 47-391 (ASSLGAHHIH…AEVIRESSST (345 aa)) lie on the Extracellular side of the membrane. A Laminin G-like domain is found at 87 to 285 (YIFSKGGGQI…DANIAIVGNV (199 aa)). 2 residues coordinate Ca(2+): aspartate 137 and valine 154. Asparagine 184 is a glycosylation site (N-linked (GlcNAc...) asparagine). Residues 201–230 (GNNDNERLAIARQRIPYRLGRVVDEWLLDK) are essential for interaction with CBLN1; modulates interaction affinity with NLGN1, NLGN2 and NLGN3; prevents interaction with DAG1/alpha-dystroglycan; modulates interaction with alpha-latrotoxin. Ca(2+)-binding residues include isoleucine 236 and asparagine 238. Serine 346 is a glycosylation site (O-linked (Xyl...) (heparan sulfate) serine). Positions 350-381 (PSDDEDIDPCEPSSGGLANPTRVGGREPYPGS) are disordered. A helical membrane pass occupies residues 392–414 (TGMVVGIVAAAALCILILLYAMY). At 415–468 (KYRNRDEGSYHVDESRNYISNSAQSNGAVVKEKQPSSAKSANKNKKNKDKEYYV) the chain is on the cytoplasmic side. The segment at 435 to 468 (NSAQSNGAVVKEKQPSSAKSANKNKKNKDKEYYV) is disordered. Phosphoserine is present on residues serine 450, serine 451, and serine 454.

Belongs to the neurexin family. The cytoplasmic C-terminal region binds to CASK. Binds NLGN1, NLGN2 and NLGN3, DAG1 (alpha-dystroglycan) and alpha-latrotoxin. Binding to neuroligins is calcium-dependent, and the binding preference ranks as follow: NLGN1 &gt; NLGN4 &gt;&gt; NLGN3 &gt; NLGN2. Interacts with CBLN2 and more weakly with CBLN4. Interacts with CBLN1; interaction is CBLN1 hexamer form-dependent; CBLN1-binding is calcium-independent; isoform 1b does not interact with CBLN1. Interacts with CLSTN3. Post-translationally, N-glycosylated. O-glycosylated; contains heparan sulfate. Heparan sulfate attachment is required for synapse development by mediating interactions with neuroligins. In terms of tissue distribution, brain.

The protein resides in the presynaptic cell membrane. Neuronal cell surface protein involved in cell recognition and cell adhesion by forming intracellular junctions through binding to neuroligins. Plays a role in formation of synaptic junctions. Functions as part of a trans-synaptic complex by binding to cerebellins and postsynaptic GRID1. This interaction helps regulate the activity of NMDA and AMPA receptors at hippocampal synapses without affecting synapse formation. NRXN1B-CBLN2-GRID1 complex transduce presynaptic signals into postsynaptic NMDAR response. The protein is Neurexin-1-beta of Rattus norvegicus (Rat).